The primary structure comprises 168 residues: Plastocyanin, chloroplastic (168 aa).

The transit peptide at 1 to 69 directs the protein to the chloroplast; sequence MATVTSTTVA…SAVLASNALA (69 aa). The Plastocyanin-like domain occupies 70–168; sequence VEVLLGASDG…AGMVGQVTVN (99 aa). 4 residues coordinate Cu cation: H106, C153, H156, and M161.

The protein belongs to the plastocyanin family. Cu(2+) serves as cofactor.

Its subcellular location is the plastid. The protein localises to the chloroplast thylakoid membrane. In terms of biological role, participates in electron transfer between P700 and the cytochrome b6-f complex in photosystem I. The chain is Plastocyanin, chloroplastic (PETE) from Pisum sativum (Garden pea).